We begin with the raw amino-acid sequence, 488 residues long: Inosine-5'-monophosphate dehydrogenase (488 aa).

CBS domains are found at residues 95–153 (VISN…SIKI) and 157–216 (MTKD…AKDE). NAD(+)-binding positions include Asp250 and 300–302 (GIG). Positions 302 and 304 each coordinate K(+). Ser305 serves as a coordination point for IMP. Cys307 is a binding site for K(+). Catalysis depends on Cys307, which acts as the Thioimidate intermediate. IMP is bound by residues 340–342 (DGG), 363–364 (GS), and 387–391 (YRGMG). Catalysis depends on Arg403, which acts as the Proton acceptor. Glu417 contacts IMP. The tract at residues 467–488 (AGLAESHPHNVQITKESPNYSF) is disordered. Glu471, Ser472, and His473 together coordinate K(+). Residues 475 to 488 (HNVQITKESPNYSF) show a composition bias toward polar residues.

Belongs to the IMPDH/GMPR family. As to quaternary structure, homotetramer. K(+) is required as a cofactor.

The enzyme catalyses IMP + NAD(+) + H2O = XMP + NADH + H(+). It functions in the pathway purine metabolism; XMP biosynthesis via de novo pathway; XMP from IMP: step 1/1. With respect to regulation, mycophenolic acid (MPA) is a non-competitive inhibitor that prevents formation of the closed enzyme conformation by binding to the same site as the amobile flap. In contrast, mizoribine monophosphate (MZP) is a competitive inhibitor that induces the closed conformation. MPA is a potent inhibitor of mammalian IMPDHs but a poor inhibitor of the bacterial enzymes. MZP is a more potent inhibitor of bacterial IMPDH. In terms of biological role, catalyzes the conversion of inosine 5'-phosphate (IMP) to xanthosine 5'-phosphate (XMP), the first committed and rate-limiting step in the de novo synthesis of guanine nucleotides, and therefore plays an important role in the regulation of cell growth. This Staphylococcus epidermidis (strain ATCC 35984 / DSM 28319 / BCRC 17069 / CCUG 31568 / BM 3577 / RP62A) protein is Inosine-5'-monophosphate dehydrogenase.